A 332-amino-acid chain; its full sequence is Glycerol-3-phosphate dehydrogenase [NAD(P)+] (332 aa).

Residues W11, R30, and K108 each contribute to the NADPH site. The sn-glycerol 3-phosphate site is built by K108, G137, and S139. A141 is a binding site for NADPH. Positions 192, 245, 255, 256, and 257 each coordinate sn-glycerol 3-phosphate. The Proton acceptor role is filled by K192. Position 256 (R256) interacts with NADPH. Positions 280 and 282 each coordinate NADPH.

It belongs to the NAD-dependent glycerol-3-phosphate dehydrogenase family.

It is found in the cytoplasm. The enzyme catalyses sn-glycerol 3-phosphate + NAD(+) = dihydroxyacetone phosphate + NADH + H(+). It carries out the reaction sn-glycerol 3-phosphate + NADP(+) = dihydroxyacetone phosphate + NADPH + H(+). It participates in membrane lipid metabolism; glycerophospholipid metabolism. Catalyzes the reduction of the glycolytic intermediate dihydroxyacetone phosphate (DHAP) to sn-glycerol 3-phosphate (G3P), the key precursor for phospholipid synthesis. In Burkholderia cenocepacia (strain HI2424), this protein is Glycerol-3-phosphate dehydrogenase [NAD(P)+].